The following is a 122-amino-acid chain: Large ribosomal subunit protein bL19c (122 aa).

The protein belongs to the bacterial ribosomal protein bL19 family.

It localises to the plastid. The protein resides in the chloroplast. This Rhodomonas salina (Cryptomonas salina) protein is Large ribosomal subunit protein bL19c (rpl19).